Consider the following 390-residue polypeptide: MRVLLRCCCGHLPVGGGAGRRSNPRWRALARLSASPGWEDGQGARVREKPPWRVLFFGNDQFARETLRALHAARENKEEELIEKLEVVTVPSPSPKGLPVKQYAVQSQLPVYEWPDVGSGEYDVGVVASFGRLLSEAFILKFPYGILNVHPSCLPRWRGPAPIIHTILHGDTIAGVTIMQIKPRRFDVGPILKQETVPVPPKSTSKELEAVLSRLGANMLISVLKNLPESLNNGRQQPAEGVTHAPKISAATSCIKWEEQTSEQIFRLYRAVGNIIPLQTLWMDNTIKLLDLVEVDNSILSDSKLTGQAVIPGSVIYHKQSQILLVCCKDDWIGVRSVMLKKTLTATDFYNGYLHPWYQKNSQAQPSQCRFQTLRLPPKKKQKKKIVAMQ.

A mitochondrion-targeting transit peptide spans 1 to 33 (MRVLLRCCCGHLPVGGGAGRRSNPRWRALARLS).

Belongs to the Fmt family.

It localises to the mitochondrion. It catalyses the reaction L-methionyl-tRNA(fMet) + (6R)-10-formyltetrahydrofolate = N-formyl-L-methionyl-tRNA(fMet) + (6S)-5,6,7,8-tetrahydrofolate + H(+). Its function is as follows. Methionyl-tRNA formyltransferase that formylates methionyl-tRNA in mitochondria and is crucial for translation initiation. The sequence is that of Methionyl-tRNA formyltransferase, mitochondrial (MTFMT) from Bos taurus (Bovine).